Here is a 393-residue protein sequence, read N- to C-terminus: L-methionine gamma-lyase (393 aa).

Pyridoxal 5'-phosphate-binding positions include 63–65 (YQR) and 93–94 (GM). Residue tyrosine 119 coordinates L-homocysteine. 206-208 (SAT) is a pyridoxal 5'-phosphate binding site. At lysine 209 the chain carries N6-(pyridoxal phosphate)lysine. Arginine 367 is an L-homocysteine binding site. Arginine 367 serves as a coordination point for L-methionine.

This sequence belongs to the trans-sulfuration enzymes family. L-methionine gamma-lyase subfamily. In terms of assembly, homotetramer. Pyridoxal 5'-phosphate is required as a cofactor.

It catalyses the reaction L-methionine + H2O = methanethiol + 2-oxobutanoate + NH4(+). It carries out the reaction L-homocysteine + H2O = 2-oxobutanoate + hydrogen sulfide + NH4(+) + H(+). Its function is as follows. Catalyzes the alpha,gamma-elimination of L-methionine to produce methanethiol, 2-oxobutanoate and ammonia. Is also able to catalyze the alpha,gamma-elimination of L-homocysteine. This Brevibacterium sandarakinum protein is L-methionine gamma-lyase.